A 179-amino-acid polypeptide reads, in one-letter code: Large ribosomal subunit protein uL5 (179 aa).

Belongs to the universal ribosomal protein uL5 family. As to quaternary structure, part of the 50S ribosomal subunit; part of the 5S rRNA/L5/L18/L25 subcomplex. Contacts the 5S rRNA and the P site tRNA. Forms a bridge to the 30S subunit in the 70S ribosome.

Functionally, this is one of the proteins that bind and probably mediate the attachment of the 5S RNA into the large ribosomal subunit, where it forms part of the central protuberance. In the 70S ribosome it contacts protein S13 of the 30S subunit (bridge B1b), connecting the 2 subunits; this bridge is implicated in subunit movement. Contacts the P site tRNA; the 5S rRNA and some of its associated proteins might help stabilize positioning of ribosome-bound tRNAs. This chain is Large ribosomal subunit protein uL5, found in Rhodospirillum rubrum (strain ATCC 11170 / ATH 1.1.1 / DSM 467 / LMG 4362 / NCIMB 8255 / S1).